The following is a 606-amino-acid chain: Urocanate reductase (606 aa).

The segment at residues 1-40 (MSNLSRRNFITGGAIAALGGTLAIAGCAPKGESSSTVAGA) is a signal peptide (tat-type signal). T111 is subject to FMN phosphoryl threonine. Residues A163, E182, T191, G195, G196, A197, A305, and D373 each coordinate FAD. R433 (proton donor) is an active-site residue. Positions 572 and 588 each coordinate FAD.

Belongs to the FAD-dependent oxidoreductase 2 family. FRD/SDH subfamily. The cofactor is FAD. Requires FMN as cofactor. In terms of processing, predicted to be exported by the Tat system. The position of the signal peptide cleavage has not been experimentally proven.

It catalyses the reaction dihydrourocanate + A = urocanate + AH2. Catalyzes the two-electron reduction of urocanate to dihydrourocanate (also named imidazole propionate or deamino-histidine). Dihydrourocanate is present at higher concentrations in subjects with type 2 diabetes, and directly impairs glucose tolerance and insulin signaling at the level of insulin receptor substrate (IRS) through activation of p38 gamma (MAPK12)-p62-mTORC1. Therefore, the UrdA enzyme from the gut bacteria E.lenta strain DSM 2243 may contribute to the pathogenesis of type 2 diabetes by producing the microbial metabolite dihydrourocanate. The chain is Urocanate reductase from Eggerthella lenta (strain ATCC 25559 / DSM 2243 / CCUG 17323 / JCM 9979 / KCTC 3265 / NCTC 11813 / VPI 0255 / 1899 B) (Eubacterium lentum).